Here is a 180-residue protein sequence, read N- to C-terminus: Large ribosomal subunit protein uL6 (180 aa).

The protein belongs to the universal ribosomal protein uL6 family. In terms of assembly, part of the 50S ribosomal subunit.

Its function is as follows. This protein binds to the 23S rRNA, and is important in its secondary structure. It is located near the subunit interface in the base of the L7/L12 stalk, and near the tRNA binding site of the peptidyltransferase center. The polypeptide is Large ribosomal subunit protein uL6 (Borreliella afzelii (strain PKo) (Borrelia afzelii)).